A 64-amino-acid polypeptide reads, in one-letter code: Large ribosomal subunit protein uL30 (64 aa).

Part of the 50S ribosomal subunit. Post-translationally, the protein is methylated on either Ala-2 or Lys-3.

The sequence is that of Large ribosomal subunit protein uL30 from Rhodopseudomonas palustris (strain ATCC BAA-98 / CGA009).